Here is a 589-residue protein sequence, read N- to C-terminus: 5'-AMP-activated protein kinase catalytic subunit alpha-1 (589 aa).

Residues 24-276 (FVIKETIGKG…VKRIVNHSWF (253 aa)) form the Protein kinase domain. Residues 30–38 (IGKGAFGAV) and Lys53 each bind ATP. Asp147 acts as the Proton acceptor in catalysis.

It belongs to the protein kinase superfamily. CAMK Ser/Thr protein kinase family. SNF1 subfamily.

It catalyses the reaction L-seryl-[protein] + ATP = O-phospho-L-seryl-[protein] + ADP + H(+). The catalysed reaction is L-threonyl-[protein] + ATP = O-phospho-L-threonyl-[protein] + ADP + H(+). Functionally, probably does not act as a sensor that couples lifespan to information about energy levels and insulin-like signals. Together with aak-2, involved in the establishment of germline stem cell (GSC) quiescence during dauer development. Plays a role in the maintenance of glycogen stores which are necessary for resistance to hyperosmotic stress. The polypeptide is 5'-AMP-activated protein kinase catalytic subunit alpha-1 (aak-1) (Caenorhabditis elegans).